Reading from the N-terminus, the 475-residue chain is Ribulose bisphosphate carboxylase large chain (475 aa).

The propeptide occupies 1–2; sequence MS. N-acetylproline is present on Pro3. The residue at position 14 (Lys14) is an N6,N6,N6-trimethyllysine. Asn123 and Thr173 together coordinate substrate. The Proton acceptor role is filled by Lys175. Lys177 is a substrate binding site. Mg(2+) contacts are provided by Lys201, Asp203, and Glu204. Lys201 is subject to N6-carboxylysine. His294 (proton acceptor) is an active-site residue. Residues Arg295, His327, and Ser379 each contribute to the substrate site.

Belongs to the RuBisCO large chain family. Type I subfamily. As to quaternary structure, heterohexadecamer of 8 large chains and 8 small chains; disulfide-linked. The disulfide link is formed within the large subunit homodimers. Requires Mg(2+) as cofactor. In terms of processing, the disulfide bond which can form in the large chain dimeric partners within the hexadecamer appears to be associated with oxidative stress and protein turnover.

The protein resides in the plastid. It is found in the chloroplast. It carries out the reaction 2 (2R)-3-phosphoglycerate + 2 H(+) = D-ribulose 1,5-bisphosphate + CO2 + H2O. The enzyme catalyses D-ribulose 1,5-bisphosphate + O2 = 2-phosphoglycolate + (2R)-3-phosphoglycerate + 2 H(+). Its function is as follows. RuBisCO catalyzes two reactions: the carboxylation of D-ribulose 1,5-bisphosphate, the primary event in carbon dioxide fixation, as well as the oxidative fragmentation of the pentose substrate in the photorespiration process. Both reactions occur simultaneously and in competition at the same active site. The protein is Ribulose bisphosphate carboxylase large chain of Stellaria media (Common chickweed).